The chain runs to 751 residues: MEGPEIQSAEAVIDNGSYGKRVVRFETGRLARQAAGSAMVYIDEETSMLSATAVGKHPREGFDFFPLTVDVEERMYAAGRIPGSFFRREGRPSTDAILTCRLIDRPLRPAFGKGLRNEVQVVVTVMSIAPDEIYNTVAINAASMSTTLSGMPFQGPVGGVRMALMAEENGGHQWIAFPKHSQLENAVFDMAVAGRVVTTKDGGQDVAIMMVEAEATDNAWELIKGQGAVAPSEELVAEGLEASKPFIKALCDAQADLAARNRKPELDLPRFGGFGDDAAQAVEQFVGERMAQVYSIAGKQEREAATDELHHDTLAELTGEGKPFEGRADEVNGAYQALTKQTVRQRILKDKVRIDGRGLTDIRQLSAEVDVLPRVHGSALFERGETQIMGVTTLNMLKMEQQIDSLSPVKHKRYIHHYNFPPYSTGETGRVGSPKRREIGHGALAERAITPVLPSREEFPYAIRQVSEALGSNGSTSMGSVCASTLALYNAGVPLRAPVAGIAMGLVSDTVDGEVQYAALTDILGAEDALGDMDFKVAGTREFVTAIQLDTKLDGIPASVLASALTQAREARLYILDVLTSAIDAPDEMSEFAPRVISVTVPVSKIGEVIGPKGKMINQIQEDTGTDISIEDDGTVYIGATDGPSAEAARSAINAIANPQVPEVGERYLGTVVKTTTFGAFVSLTPGKDGLLHISEMRQLNDDKRVNEVDDVLSVGQKVQVEITKVDDRGKLSLAPVVAGSDSDAASDDEN.

Mg(2+) is bound by residues D528 and D534. One can recognise a KH domain in the interval 594–653; the sequence is PRVISVTVPVSKIGEVIGPKGKMINQIQEDTGTDISIEDDGTVYIGATDGPSAEAARSAI. The S1 motif domain occupies 665–737; the sequence is GERYLGTVVK…DRGKLSLAPV (73 aa).

This sequence belongs to the polyribonucleotide nucleotidyltransferase family. Mg(2+) serves as cofactor.

The protein resides in the cytoplasm. The enzyme catalyses RNA(n+1) + phosphate = RNA(n) + a ribonucleoside 5'-diphosphate. Functionally, involved in mRNA degradation. Catalyzes the phosphorolysis of single-stranded polyribonucleotides processively in the 3'- to 5'-direction. This Kocuria rhizophila (strain ATCC 9341 / DSM 348 / NBRC 103217 / DC2201) protein is Polyribonucleotide nucleotidyltransferase.